The primary structure comprises 390 residues: LL-diaminopimelate aminotransferase (390 aa).

The substrate site is built by Y13, G38, K102, Y126, and N176. Pyridoxal 5'-phosphate is bound by residues 101–102, Y126, N176, Y207, and 235–237; these read SK and SVS. The residue at position 238 (K238) is an N6-(pyridoxal phosphate)lysine. R246 contacts pyridoxal 5'-phosphate. R364 lines the substrate pocket.

The protein belongs to the class-I pyridoxal-phosphate-dependent aminotransferase family. LL-diaminopimelate aminotransferase subfamily. Homodimer. Requires pyridoxal 5'-phosphate as cofactor.

The enzyme catalyses (2S,6S)-2,6-diaminopimelate + 2-oxoglutarate = (S)-2,3,4,5-tetrahydrodipicolinate + L-glutamate + H2O + H(+). Its pathway is amino-acid biosynthesis; L-lysine biosynthesis via DAP pathway; LL-2,6-diaminopimelate from (S)-tetrahydrodipicolinate (aminotransferase route): step 1/1. Its function is as follows. Involved in the synthesis of meso-diaminopimelate (m-DAP or DL-DAP), required for both lysine and peptidoglycan biosynthesis. Catalyzes the direct conversion of tetrahydrodipicolinate to LL-diaminopimelate. Is also able to catalyze the reverse reaction in vitro, i.e. the transamination of LL-diaminopimelate with 2-oxoglutarate to produce tetrahydrodipicolinate and glutamate. Can also use m-DAP instead of LL-DAP as the amino-group donor, and oxaloacetate instead of 2-oxoglutarate as the amino-group acceptor. The protein is LL-diaminopimelate aminotransferase of Moorella thermoacetica (strain ATCC 39073 / JCM 9320).